The chain runs to 266 residues: MAYSKILFCFMIGFVGFLPAITMATQYLVGDDRGWTLDFDYQTWAKNKTFKVGDTLAPPPSEGLTSGYDVITLTKPGKKWYICGVPTHCSDYNQKLVITVEDGAPAPAPASPAPQTEYWVGDDKGWTIDVDYQAWAKGKTFKVGDTLVFKYTKGHHNVFKVNQTGFQNCIAPPPSEGLTSGHDVITLAAPGKKWYICGFPTHCSEHKQKLAITVEGAPAQTPPVWAPAPAPGTPKKIDTGNSYKITSPYKMFVGGAVSIWTILTLV.

The first 24 residues, 1–24 (MAYSKILFCFMIGFVGFLPAITMA), serve as a signal peptide directing secretion. Phytocyanin domains follow at residues 25 to 56 (TQYL…GDTL), 57 to 102 (APPP…TVED), and 116 to 216 (TEYW…TVEG). Residue asparagine 47 is glycosylated (N-linked (GlcNAc...) asparagine). Histidine 156 serves as a coordination point for Cu cation. A glycan (N-linked (GlcNAc...) asparagine) is linked at asparagine 162. An intrachain disulfide couples cysteine 169 to cysteine 203. Residues cysteine 197, histidine 202, and glutamine 208 each coordinate Cu cation. A helical transmembrane segment spans residues 245 to 265 (ITSPYKMFVGGAVSIWTILTL).

The protein resides in the membrane. The protein is Blue copper protein of Petunia hybrida (Petunia).